Reading from the N-terminus, the 138-residue chain is Homeobox protein HD-11 (138 aa).

The segment at residues 30 to 89 (CTGKQMRKTRLQTCVLNRIFEISRFPSSKTIVDLALLINVHPKSIQKWFQNTRQAIRKKG) is a DNA-binding region (homeobox).

It is found in the nucleus. This chain is Homeobox protein HD-11 (HD-11), found in Encephalitozoon cuniculi (strain GB-M1) (Microsporidian parasite).